An 87-amino-acid polypeptide reads, in one-letter code: Toxin CsEv3 (87 aa).

Positions 1–19 (MNSLLMITACLFLIGTVWA) are cleaved as a signal peptide. The region spanning 20–85 (KEGYLVNKST…TYPLPNKSCG (66 aa)) is the LCN-type CS-alpha/beta domain. Intrachain disulfides connect Cys-31–Cys-84, Cys-35–Cys-60, Cys-44–Cys-65, and Cys-48–Cys-67. Residue Cys-84 is modified to Cysteine amide.

The protein belongs to the long (4 C-C) scorpion toxin superfamily. Sodium channel inhibitor family. Beta subfamily. In terms of tissue distribution, expressed by the venom gland.

It is found in the secreted. Functionally, beta toxins bind voltage-independently at site-4 of sodium channels (Nav) and shift the voltage of activation toward more negative potentials thereby affecting sodium channel activation and promoting spontaneous and repetitive firing. Induces immediate paralysis in crickets after injection, with a total paralysis occurring within 15-30 minutes and lasting for 1-2 hours. Is also lethal to vertebrate (chicks) when injected in very high dosages (more that 100 mg/kg). This Centruroides sculpturatus (Arizona bark scorpion) protein is Toxin CsEv3.